The primary structure comprises 117 residues: Large ribosomal subunit protein bL19 (117 aa).

The protein belongs to the bacterial ribosomal protein bL19 family.

Its function is as follows. This protein is located at the 30S-50S ribosomal subunit interface and may play a role in the structure and function of the aminoacyl-tRNA binding site. In Mycoplasmopsis pulmonis (strain UAB CTIP) (Mycoplasma pulmonis), this protein is Large ribosomal subunit protein bL19.